The sequence spans 342 residues: Dihydroorotase (342 aa).

His-13 and His-15 together coordinate Zn(2+). Substrate-binding positions include 15–17 and Asn-41; that span reads HLR. 3 residues coordinate Zn(2+): Lys-98, His-135, and His-173. Position 98 is an N6-carboxylysine (Lys-98). Residue His-135 participates in substrate binding. A substrate-binding site is contributed by Leu-218. Zn(2+) is bound at residue Asp-246. Asp-246 is a catalytic residue. Positions 250 and 262 each coordinate substrate.

It belongs to the metallo-dependent hydrolases superfamily. DHOase family. Class II DHOase subfamily. In terms of assembly, homodimer. Zn(2+) serves as cofactor.

It catalyses the reaction (S)-dihydroorotate + H2O = N-carbamoyl-L-aspartate + H(+). It functions in the pathway pyrimidine metabolism; UMP biosynthesis via de novo pathway; (S)-dihydroorotate from bicarbonate: step 3/3. In terms of biological role, catalyzes the reversible cyclization of carbamoyl aspartate to dihydroorotate. The chain is Dihydroorotase from Photobacterium profundum (strain SS9).